A 338-amino-acid chain; its full sequence is Decarboxylase macB (338 aa).

Positions 7, 9, 159, and 283 each coordinate Zn(2+).

Belongs to the metallo-dependent hydrolases superfamily. ACMSD family.

It carries out the reaction 6-methylsalicylate + H(+) = 3-methylphenol + CO2. Its pathway is secondary metabolite biosynthesis; terpenoid biosynthesis. Functionally, decarboxylase; part of the gene cluster that mediates the biosynthesis of macrophorins, isoprenoid epoxycyclohexenones containing cyclized drimane moieties. The first step of the pathway is the synthesis of 6-methylsalicylic acid (6-MSA) by the polyketide synthase macA. 6-MSA is then converted to m-cresol by the decarboxylase macB. The cytochrome P450 monooxygenase macC then catalyzes the oxidation of m-cresol to toluquinol. Epoxidation of toluquinol is then performed by the short chain dehydrogenase macD, with the help of macE, and a further prenylation by macG leads to 7-deacetoxyyanuthone A. The next step is the hydroxylation of C-22 of 7-deacetoxyyanuthone A by the cytochrome P450 monooxygenase macH to yield 22-deacetylyanuthone A. O-Mevalon transferase macI then attaches mevalon to the hydroxyl group of 22-deacetylyanuthone A to produce yanuthone E. The terpene cyclase macJ catalyzes the cyclization of 22-deacetylyanuthone A to macrophorin A. MacJ is also able to catalyze cyclization of yanuthone E and 7-deacetoxyyanuthone A to their corresponding macrophorins. The macJ products can be further modified by macH and macJ, as well as by the FAD-dependent monooxygenase macF, to produce additional macrophorins, including 4'-oxomacrophorin A, 4'-oxomacrophorin D and 4'-oxomacrophorin E. The sequence is that of Decarboxylase macB from Penicillium terrestre.